The primary structure comprises 121 residues: Large ribosomal subunit protein uL14c (121 aa).

It belongs to the universal ribosomal protein uL14 family. As to quaternary structure, part of the 50S ribosomal subunit.

The protein localises to the plastid. Its subcellular location is the chloroplast. In terms of biological role, binds to 23S rRNA. This chain is Large ribosomal subunit protein uL14c, found in Guillardia theta (Cryptophyte).